Consider the following 476-residue polypeptide: Probable serine carboxypeptidase CPVL (476 aa).

A signal peptide spans 1–22 (MVGTMWKVIVSLVLLMPGSCDG). N-linked (GlcNAc...) asparagine glycosylation is found at N81 and N132. S204 is a catalytic residue. N-linked (GlcNAc...) asparagine glycosylation is found at N307 and N346. Residues D388 and H448 contribute to the active site.

It belongs to the peptidase S10 family.

May be involved in the digestion of phagocytosed particles in the lysosome, participation in an inflammatory protease cascade, and trimming of peptides for antigen presentation. The chain is Probable serine carboxypeptidase CPVL (CPVL) from Pongo abelii (Sumatran orangutan).